The chain runs to 104 residues: MPRLCVCMLVLVLALATFSEASWKPRSQLQDASSGPRTNGALEQHQLEKLGPASHHRRQLGPQGPQHFIADLSKKQRPPMEEEEEAYGWMDFGRRSAEEEDQYN.

The first 21 residues, 1-21 (MPRLCVCMLVLVLALATFSEA), serve as a signal peptide directing secretion. Positions 22-58 (SWKPRSQLQDASSGPRTNGALEQHQLEKLGPASHHRR) are excised as a propeptide. The interval 23 to 104 (WKPRSQLQDA…RSAEEEDQYN (82 aa)) is disordered. Polar residues predominate over residues 25–37 (PRSQLQDASSGPR). Sulfotyrosine is present on Tyr87. Residue Phe92 is modified to Phenylalanine amide. Ser96 carries the post-translational modification Phosphoserine. A propeptide spanning residues 96–104 (SAEEEDQYN) is cleaved from the precursor. Tyr103 is modified (sulfotyrosine).

This sequence belongs to the gastrin/cholecystokinin family. Post-translationally, sulfation on Tyr-87 enhances proteolytic processing, and blocks peptide degradation. Levels of sulfation differ between proteolytically-cleaved gastrins and between tissues.

The protein localises to the secreted. Its function is as follows. Gastrin stimulates the stomach mucosa to produce and secrete hydrochloric acid and the pancreas to secrete its digestive enzymes. It also stimulates smooth muscle contraction and increases blood circulation and water secretion in the stomach and intestine. The sequence is that of Gastrin (Gast) from Rattus norvegicus (Rat).